A 259-amino-acid chain; its full sequence is MAYVTMKQMLETGVHFGHQTRRWNPKMRPYIFGARNGIHIMDLQQTVKLFRKAHDFIADNVAKGGKVLFIGTKRQAQEAIAAEASRAGMFHVTHRWMGGTLTNFQTIKKSIDRLKKLEEMFEDGSIKRFPKKEIVMMGREVKKLNLALGGIKDLNGAPAVAFVIDPKREQIAIQECRKLGIPVVAVVDSNCDPDMVDYIIPGNDDAIRAIKLFASHMADACLEGAARRKEDKAMEAEETKAAEKAVETEAKEETPQEAK.

The tract at residues 232-259 is disordered; the sequence is KAMEAEETKAAEKAVETEAKEETPQEAK.

This sequence belongs to the universal ribosomal protein uS2 family.

The chain is Small ribosomal subunit protein uS2 from Maridesulfovibrio salexigens (strain ATCC 14822 / DSM 2638 / NCIMB 8403 / VKM B-1763) (Desulfovibrio salexigens).